The primary structure comprises 546 residues: Glutamate--tRNA ligase (546 aa).

Positions 41-51 match the 'HIGH' region motif; sequence PSPTGFQHIGG. Positions 293-297 match the 'KMSKS' region motif; it reads KLSKR. Lys-296 lines the ATP pocket.

Belongs to the class-I aminoacyl-tRNA synthetase family. Glutamate--tRNA ligase type 1 subfamily. In terms of assembly, monomer.

Its subcellular location is the cytoplasm. It catalyses the reaction tRNA(Glu) + L-glutamate + ATP = L-glutamyl-tRNA(Glu) + AMP + diphosphate. Its function is as follows. Catalyzes the attachment of glutamate to tRNA(Glu) in a two-step reaction: glutamate is first activated by ATP to form Glu-AMP and then transferred to the acceptor end of tRNA(Glu). This Clostridium perfringens (strain 13 / Type A) protein is Glutamate--tRNA ligase.